A 319-amino-acid polypeptide reads, in one-letter code: ATP-dependent 6-phosphofructokinase (319 aa).

An ATP-binding site is contributed by Gly-11. 21 to 25 lines the ADP pocket; the sequence is RAVVR. ATP-binding positions include 72 to 73 and 102 to 105; these read RC and GDGS. Asp-103 provides a ligand contact to Mg(2+). 125 to 127 is a substrate binding site; the sequence is TID. Asp-127 functions as the Proton acceptor in the catalytic mechanism. ADP is bound at residue Arg-154. Substrate is bound by residues Arg-162 and 169-171; that span reads MGR. Residues 185–187, Arg-211, and 213–215 contribute to the ADP site; these read GAE and KKH. Substrate is bound by residues Glu-222, Arg-243, and 249–252; that span reads HVQR.

It belongs to the phosphofructokinase type A (PFKA) family. ATP-dependent PFK group I subfamily. Prokaryotic clade 'B1' sub-subfamily. In terms of assembly, homotetramer. Mg(2+) is required as a cofactor.

It is found in the cytoplasm. It carries out the reaction beta-D-fructose 6-phosphate + ATP = beta-D-fructose 1,6-bisphosphate + ADP + H(+). Its pathway is carbohydrate degradation; glycolysis; D-glyceraldehyde 3-phosphate and glycerone phosphate from D-glucose: step 3/4. Allosterically activated by ADP and other diphosphonucleosides, and allosterically inhibited by phosphoenolpyruvate. Catalyzes the phosphorylation of D-fructose 6-phosphate to fructose 1,6-bisphosphate by ATP, the first committing step of glycolysis. This is ATP-dependent 6-phosphofructokinase from Bacillus mycoides (strain KBAB4) (Bacillus weihenstephanensis).